Consider the following 137-residue polypeptide: Nuclear transition protein 2 (137 aa).

Polar residues predominate over residues Met-1–Pro-21. Residues Met-1–Asn-137 form a disordered region. Residues His-12, His-16, His-24, Cys-29, Cys-31, Cys-35, and Cys-38 each coordinate Zn(2+). Residues Gln-22–Pro-74 show a composition bias toward low complexity. A compositionally biased stretch (basic residues) spans Pro-78–Pro-91. Positions Gly-110 to Ile-118 match the Nuclear localization signal motif. Over residues Lys-126–Asn-137 the composition is skewed to basic residues. A Phosphoserine modification is found at Ser-132.

Belongs to the nuclear transition protein 2 family. Testis. Expression is restricted to haploid germ cells.

Its subcellular location is the nucleus. It localises to the nucleolus. It is found in the chromosome. Plays a key role in the replacement of histones to protamine in the elongating spermatids of mammals. In condensing spermatids, loaded onto the nucleosomes, where it promotes the recruitment and processing of protamines, which are responsible for histone eviction. In Sus scrofa (Pig), this protein is Nuclear transition protein 2 (TNP2).